A 260-amino-acid polypeptide reads, in one-letter code: MIEINNKVDFIFYTNGTPNTYKIKLILLELENSHGITYESKTIDITKKENYSDEFVKINPNKKVPAIVDQTGEKPIIVFESVSILIYLAQKYNTFLPDFKTNPKENSDVITWSVWQAANLGPAFGQFFHFSYFSPTVQEYSLHRFNNEAQRVLRLLDDRLSVSPYIGGNEFSIADIASAGWLLYLNFVPFYNATKERFPNIFKWLDLIGQRDAVKQVNQQISEGFKNFSTAGIRALFTNDPELINAKAPVGIENVVLKYD.

Residues 7-96 (KVDFIFYTNG…YLAQKYNTFL (90 aa)) form the GST N-terminal domain. A GST C-terminal domain is found at 102 to 228 (NPKENSDVIT…QQISEGFKNF (127 aa)).

It belongs to the GST superfamily.

This Dictyostelium discoideum (Social amoeba) protein is Glutathione S-transferase domain-containing protein DDB_G0280881.